Here is an 843-residue protein sequence, read N- to C-terminus: Beta-mannosidase B (843 aa).

Residue Glu430 is the Proton donor of the active site. The N-linked (GlcNAc...) asparagine glycan is linked to Asn721.

This sequence belongs to the glycosyl hydrolase 2 family. Beta-mannosidase B subfamily.

The enzyme catalyses Hydrolysis of terminal, non-reducing beta-D-mannose residues in beta-D-mannosides.. The protein operates within glycan metabolism; N-glycan degradation. Exoglycosidase that cleaves the single beta-linked mannose residue from the non-reducing end of beta-mannosidic oligosaccharides of various complexity and length. Prefers mannobiose over mannotriose and has no activity against polymeric mannan. Is also severely restricted by galactosyl substitutions at the +1 subsite. In Aspergillus terreus (strain NIH 2624 / FGSC A1156), this protein is Beta-mannosidase B (mndB).